An 89-amino-acid polypeptide reads, in one-letter code: Small ribosomal subunit protein uS15 (89 aa).

The protein belongs to the universal ribosomal protein uS15 family. In terms of assembly, part of the 30S ribosomal subunit. Forms a bridge to the 50S subunit in the 70S ribosome, contacting the 23S rRNA.

One of the primary rRNA binding proteins, it binds directly to 16S rRNA where it helps nucleate assembly of the platform of the 30S subunit by binding and bridging several RNA helices of the 16S rRNA. Functionally, forms an intersubunit bridge (bridge B4) with the 23S rRNA of the 50S subunit in the ribosome. This is Small ribosomal subunit protein uS15 from Chlorobium phaeobacteroides (strain DSM 266 / SMG 266 / 2430).